We begin with the raw amino-acid sequence, 360 residues long: Iron uptake protein A1 (360 aa).

Positions 1-28 (MVQKLSRRLFLSIGTAFTVVVGSQLLSS) are cleaved as a signal peptide. Residue Cys29 is the site of N-palmitoyl cysteine attachment. Cys29 is lipidated: S-diacylglycerol cysteine. Residues His54, Tyr55, Tyr185, Tyr241, and Tyr242 each coordinate Fe cation.

It belongs to the bacterial solute-binding protein 1 family.

It is found in the cellular thylakoid membrane. It localises to the cell membrane. Its function is as follows. Plays an important role in protecting the acceptor side of photosystem II (PSII) against oxidative damage, especially under iron-limiting growth conditions. The differing subcellular locations of futA1 (predominantly thylakoid lumen) and futA2 (predominantly periplasmic) suggest they may fulfill different roles. A major iron-binding protein involved in Fe(3+) uptake, probably part of a periplasmic ABC transporter complex futA1A2BC (TC 3.A.1.10.2) involved in Fe(3+) ion import (ferric iron). This protein and futA2 (slr0531) may be subunit proteins that have redundant or overlapping substrate-binding functions. This is Iron uptake protein A1 (futA1) from Synechocystis sp. (strain ATCC 27184 / PCC 6803 / Kazusa).